A 159-amino-acid chain; its full sequence is Putative RING-H2 finger protein ATL69 (159 aa).

A helical transmembrane segment spans residues 13 to 33 (LGYGIAIAVSILVLISFIMLA). An RING-type; atypical zinc finger spans residues 94–136 (CSICLCDYEAREPVRCIPECNHCFHTDCVDEWLRTSATCPLCR).

It belongs to the RING-type zinc finger family. ATL subfamily.

It is found in the membrane. The enzyme catalyses S-ubiquitinyl-[E2 ubiquitin-conjugating enzyme]-L-cysteine + [acceptor protein]-L-lysine = [E2 ubiquitin-conjugating enzyme]-L-cysteine + N(6)-ubiquitinyl-[acceptor protein]-L-lysine.. It functions in the pathway protein modification; protein ubiquitination. The chain is Putative RING-H2 finger protein ATL69 (ATL69) from Arabidopsis thaliana (Mouse-ear cress).